The following is a 995-amino-acid chain: Pheromone-regulated membrane protein 10 (995 aa).

Disordered regions lie at residues 1 to 217 (MSSH…GEKH), 253 to 299 (GRVL…AVEM), 326 to 407 (DQSF…YIAP), and 425 to 508 (NPQD…NPDQ). Residues 74–88 (SNSSTTNNSTESSGS) are compositionally biased toward low complexity. Basic and acidic residues predominate over residues 110–121 (VKGESGDAHEGS). Positions 157–166 (SRGSVGSSSS) are enriched in low complexity. Over residues 170–187 (KGSDDVNEKETNLDHDYD) the composition is skewed to basic and acidic residues. The span at 259–269 (GSGGGGGGGLI) shows a compositional bias: gly residues. A compositionally biased stretch (acidic residues) spans 283 to 296 (EEKEVGGGGEDDGA). Positions 326–347 (DQSFTYDEPNQSAGSSRNSTAP) are enriched in polar residues. Composition is skewed to basic and acidic residues over residues 359-371 (DDHK…DQGK) and 385-396 (GNDDPEDQHLLL). Residues 495-506 (EADDEDEDEENP) show a composition bias toward acidic residues. Helical transmembrane passes span 678-698 (VFLY…GGWL), 700-720 (IPVT…VSSM), 726-746 (SVFE…IGSI), 752-772 (FCFS…YIIL), 794-814 (IIYS…FGWV), 833-850 (KYRI…GLIN), 858-878 (PVMM…GKHF), 881-901 (VPEF…NVYS), 906-926 (GMAV…GIAS), and 965-985 (VEVS…VYPF).

The protein belongs to the ThrE exporter (TC 2.A.79) family.

Its subcellular location is the membrane. The sequence is that of Pheromone-regulated membrane protein 10 from Pichia sorbitophila (strain ATCC MYA-4447 / BCRC 22081 / CBS 7064 / NBRC 10061 / NRRL Y-12695) (Hybrid yeast).